We begin with the raw amino-acid sequence, 216 residues long: MQAFTFHEGLVAPLDRENVDTDLIIPKQFLKSIKRTGFGPNLFDELRYLDHGEPGMDNSKRPLNPDFVLNQPRYQGASILLGRKNFGCGSSREHAPWALQQYGFRAIIAPSYADIFFNNSFKNGLLPIVLTELEVARLFDEVKAFPGYKLKVDLERQVVIAADGREMAFEVDAFRKYCLLNGFDDIGLTLRQSDKIRAFEAERLARHPWLESRPVA.

This sequence belongs to the LeuD family. LeuD type 1 subfamily. In terms of assembly, heterodimer of LeuC and LeuD.

It carries out the reaction (2R,3S)-3-isopropylmalate = (2S)-2-isopropylmalate. It participates in amino-acid biosynthesis; L-leucine biosynthesis; L-leucine from 3-methyl-2-oxobutanoate: step 2/4. Functionally, catalyzes the isomerization between 2-isopropylmalate and 3-isopropylmalate, via the formation of 2-isopropylmaleate. The sequence is that of 3-isopropylmalate dehydratase small subunit from Bordetella avium (strain 197N).